The primary structure comprises 282 residues: Shikimate dehydrogenase (NADP(+)) (282 aa).

Shikimate contacts are provided by residues 16-18 and threonine 63; that span reads SLS. Lysine 67 functions as the Proton acceptor in the catalytic mechanism. Residues asparagine 88 and aspartate 103 each contribute to the shikimate site. NADP(+)-binding positions include 128–132 and glycine 243; that span reads GAGGA.

Belongs to the shikimate dehydrogenase family. Homodimer.

It carries out the reaction shikimate + NADP(+) = 3-dehydroshikimate + NADPH + H(+). It functions in the pathway metabolic intermediate biosynthesis; chorismate biosynthesis; chorismate from D-erythrose 4-phosphate and phosphoenolpyruvate: step 4/7. Involved in the biosynthesis of the chorismate, which leads to the biosynthesis of aromatic amino acids. Catalyzes the reversible NADPH linked reduction of 3-dehydroshikimate (DHSA) to yield shikimate (SA). The sequence is that of Shikimate dehydrogenase (NADP(+)) from Xylella fastidiosa (strain Temecula1 / ATCC 700964).